The primary structure comprises 93 residues: Alpha-conotoxin RVIIIA (93 aa).

The N-terminal stretch at 1-20 (MMSKMGAMFVLLLLFTLASS) is a signal peptide. Residues 21-46 (QQEGDVQARKTHPKREFQRILLRSGR) constitute a propeptide that is removed on maturation. Glu-63 and Glu-68 each carry 4-carboxyglutamate.

Contains 5 disulfide bonds. In terms of tissue distribution, expressed by the venom duct.

The protein resides in the secreted. Alpha-conotoxins act on postsynaptic membranes, they bind to the nicotinic acetylcholine receptors (nAChR) and thus inhibit them. This toxin provokes a nearly complete and slowly reversible inhibition of both the human adult (alpha-1-beta-1-epsilon-delta (CHRNA1-CHRNB1-CHRND-CHRNE)) and human fetal (alpha-1-beta-1-gamma-delta (CHRNA1-CHRNB1-CHRNG-CHRND)) neuromuscular nAChRs. It also reversibly blocks the neuromuscular alpha-7/CHRNA7 nAChR, the alpha-3-beta-2 (CHRNA3-CHRNB2) nAChR, the chimeric alpha-6 or -3/beta-3 or -2 (CHRNA6/CHRNA3-CHRNB2-CHRNB3) nAChR and with a low potency the alpha-4-beta-2 (CHRNA4-CHRNB2) nAChR. In addition, the toxin also inhibits the alpha-9-alpha-10 (CHRNA9-CHRNA10) nAChR with a high potency (IC(50)=187 nM). The polypeptide is Alpha-conotoxin RVIIIA (Conus radiatus (Rayed cone)).